Here is a 448-residue protein sequence, read N- to C-terminus: Phosphohexose mutases (448 aa).

Residue serine 97 is the Phosphoserine intermediate of the active site. The Mg(2+) site is built by serine 97, aspartate 237, aspartate 239, and aspartate 241.

The protein belongs to the phosphohexose mutase family. It depends on Mg(2+) as a cofactor.

The enzyme catalyses alpha-D-glucose 1-phosphate = alpha-D-glucose 6-phosphate. The catalysed reaction is alpha-D-mannose 1-phosphate = D-mannose 6-phosphate. It functions in the pathway nucleotide-sugar biosynthesis; GDP-alpha-D-mannose biosynthesis; alpha-D-mannose 1-phosphate from D-fructose 6-phosphate: step 2/2. Functionally, involved in xanthan production. The polypeptide is Phosphohexose mutases (xanA) (Xanthomonas campestris pv. campestris (strain ATCC 33913 / DSM 3586 / NCPPB 528 / LMG 568 / P 25)).